Here is a 121-residue protein sequence, read N- to C-terminus: Large ribosomal subunit protein uL14c (121 aa).

This sequence belongs to the universal ribosomal protein uL14 family. In terms of assembly, part of the 50S ribosomal subunit.

The protein localises to the plastid. It localises to the apicoplast. Binds to 23S rRNA. This is Large ribosomal subunit protein uL14c (rpl14) from Toxoplasma gondii.